The sequence spans 455 residues: 3-isopropylmalate dehydratase large subunit (455 aa).

The [4Fe-4S] cluster site is built by cysteine 337, cysteine 397, and cysteine 400.

It belongs to the aconitase/IPM isomerase family. LeuC type 1 subfamily. As to quaternary structure, heterodimer of LeuC and LeuD. [4Fe-4S] cluster is required as a cofactor.

The enzyme catalyses (2R,3S)-3-isopropylmalate = (2S)-2-isopropylmalate. It participates in amino-acid biosynthesis; L-leucine biosynthesis; L-leucine from 3-methyl-2-oxobutanoate: step 2/4. Its function is as follows. Catalyzes the isomerization between 2-isopropylmalate and 3-isopropylmalate, via the formation of 2-isopropylmaleate. The chain is 3-isopropylmalate dehydratase large subunit from Leuconostoc citreum (strain KM20).